The following is a 333-amino-acid chain: Ornithine carbamoyltransferase (333 aa).

Carbamoyl phosphate is bound by residues 57–60 (STRT), R108, and 135–138 (HPTQ). L-ornithine is bound by residues N168, D232, and 236-237 (SM). Carbamoyl phosphate contacts are provided by residues 274–275 (CL) and R319.

Belongs to the aspartate/ornithine carbamoyltransferase superfamily. OTCase family.

The protein resides in the cytoplasm. The catalysed reaction is carbamoyl phosphate + L-ornithine = L-citrulline + phosphate + H(+). Its pathway is amino-acid degradation; L-arginine degradation via ADI pathway; carbamoyl phosphate from L-arginine: step 2/2. Functionally, reversibly catalyzes the transfer of the carbamoyl group from carbamoyl phosphate (CP) to the N(epsilon) atom of ornithine (ORN) to produce L-citrulline. The sequence is that of Ornithine carbamoyltransferase from Pediococcus pentosaceus (strain ATCC 25745 / CCUG 21536 / LMG 10740 / 183-1w).